A 688-amino-acid chain; its full sequence is MAKKKGENYDSDGGDDQDYDEEPNFDDPEGFVDDVSDEELLGDFLKQKPCESDGVENVIVVDNIPVVGPARFHKLQGVLEKLFKTAGTIVNIHYPKDDEENTRGYAFIEFKNPEMAEEAVKAFNNYRLDKSHTLLVNLFSDFQKYSDIPKEWSPPEPQPYKMQNDLYNFITEPDAQDQFCVIAESSPGAVQVQFWQNTQPEPVELLTRDRFTETYVKWSPLGTYIVTFHKQGVVIWGGSNFTKINKFPHSGTQYVDFSPCEQYLVTYGPNGQKIIIWDIRTGTEKRSFISDGTSNMSMFRWSHDDKYVARMGDNAIHVYETSTFYLLDKKSIKVQGIRNFSWSPTDNIIAYWMSEDLEAPARVTLLEIPRKNEIRNKNLFNVADCKIHWQKSGDYLCVKVDRYSKSKKDKKDADVKFLGMFYNFEIFHMREKDIPVDSVEVKETILAFAWEPVGSKFAIIHGDPASANVSFYEAKKGQEPTMLKKLEKKICSHLFWSPRGQFIVLANLQAGSFEFVDTNDFTIMKSGDHFRASEVEWDPTGRYVVTGTSGKVKEDHGYHIWSFQGKILKRVNLKNFILFLWRPRPPTLLSDEKQKEIRKNLKKYYAQFESKDRIRMTRASKELLEKRAKLREQFVEYRTKRVSEWEEQKYRRMQLRNNIDTDTLDADPDNVEEEIVEILVREDTTLLE.

A disordered region spans residues 1-32 (MAKKKGENYDSDGGDDQDYDEEPNFDDPEGFV). The span at 9-32 (YDSDGGDDQDYDEEPNFDDPEGFV) shows a compositional bias: acidic residues. Positions 57-141 (NVIVVDNIPV…HTLLVNLFSD (85 aa)) constitute an RRM domain. WD repeat units follow at residues 208 to 246 (RDRFTETYVKWSPLGTYIVTFHKQGVVIWGGSNFTKINK), 247 to 287 (FPHS…EKRS), 291 to 329 (DGTSNMSMFRWSHDDKYVARMGDNAIHVYETSTFYLLDK), 332 to 367 (IKVQGIRNFSWSPTDNIIAYWMSEDLEAPARVTLLE), 440 to 482 (EVKE…EPTM), and 527 to 572 (GDHF…KRVN). A coiled-coil region spans residues 613–642 (RIRMTRASKELLEKRAKLREQFVEYRTKRV).

Belongs to the eIF-3 subunit B family. As to quaternary structure, component of the eukaryotic translation initiation factor 3 (eIF-3) complex.

The protein localises to the cytoplasm. Functionally, RNA-binding component of the eukaryotic translation initiation factor 3 (eIF-3) complex, which is involved in protein synthesis of a specialized repertoire of mRNAs and, together with other initiation factors, stimulates binding of mRNA and methionyl-tRNAi to the 40S ribosome. The eIF-3 complex specifically targets and initiates translation of a subset of mRNAs involved in cell proliferation. The chain is Eukaryotic translation initiation factor 3 subunit B from Aedes aegypti (Yellowfever mosquito).